The chain runs to 125 residues: Small ribosomal subunit protein uS13 (125 aa).

Positions arginine 92–lysine 125 are disordered.

This sequence belongs to the universal ribosomal protein uS13 family. In terms of assembly, part of the 30S ribosomal subunit. Forms a loose heterodimer with protein S19. Forms two bridges to the 50S subunit in the 70S ribosome.

In terms of biological role, located at the top of the head of the 30S subunit, it contacts several helices of the 16S rRNA. In the 70S ribosome it contacts the 23S rRNA (bridge B1a) and protein L5 of the 50S subunit (bridge B1b), connecting the 2 subunits; these bridges are implicated in subunit movement. Contacts the tRNAs in the A and P-sites. The polypeptide is Small ribosomal subunit protein uS13 (Pelodictyon phaeoclathratiforme (strain DSM 5477 / BU-1)).